The following is a 152-amino-acid chain: Ribonuclease H (152 aa).

Residues 6 to 147 (KKNNVIAYTD…ADELANKAIA (142 aa)) form the RNase H type-1 domain. Residues Asp15, Glu53, Asp75, and Asp139 each coordinate Mg(2+).

Belongs to the RNase H family. As to quaternary structure, monomer. The cofactor is Mg(2+).

The protein resides in the cytoplasm. The catalysed reaction is Endonucleolytic cleavage to 5'-phosphomonoester.. Its function is as follows. Endonuclease that specifically degrades the RNA of RNA-DNA hybrids. In Francisella philomiragia subsp. philomiragia (strain ATCC 25017 / CCUG 19701 / FSC 153 / O#319-036), this protein is Ribonuclease H.